We begin with the raw amino-acid sequence, 461 residues long: tRNA modification GTPase MnmE (461 aa).

Residues Arg-27, Glu-89, and Arg-128 each contribute to the (6S)-5-formyl-5,6,7,8-tetrahydrofolate site. The 159-residue stretch at 224–382 folds into the TrmE-type G domain; sequence GLKTAIVGRP…LEALIKKLFF (159 aa). Asn-234 lines the K(+) pocket. Residues 234–239, 253–259, and 278–281 contribute to the GTP site; these read NVGKSS, TDVAGTT, and DTAG. Ser-238 provides a ligand contact to Mg(2+). Residues Thr-253, Val-255, and Thr-258 each contribute to the K(+) site. Residue Thr-259 participates in Mg(2+) binding. Lys-461 lines the (6S)-5-formyl-5,6,7,8-tetrahydrofolate pocket.

It belongs to the TRAFAC class TrmE-Era-EngA-EngB-Septin-like GTPase superfamily. TrmE GTPase family. In terms of assembly, homodimer. Heterotetramer of two MnmE and two MnmG subunits. The cofactor is K(+).

The protein localises to the cytoplasm. In terms of biological role, exhibits a very high intrinsic GTPase hydrolysis rate. Involved in the addition of a carboxymethylaminomethyl (cmnm) group at the wobble position (U34) of certain tRNAs, forming tRNA-cmnm(5)s(2)U34. The chain is tRNA modification GTPase MnmE from Lactobacillus delbrueckii subsp. bulgaricus (strain ATCC BAA-365 / Lb-18).